The primary structure comprises 565 residues: MEPKTKKQRSLYIPYAGPVLLEFPLLNKGSAFSMEERRNFNLLGLLPEVVETIEEQAERAWIQYQGFKTEIDKHIYLRNIQDTNETLFYRLVNNHLDEMMPVIYTPTVGAACERFSEIYRRSRGVFISYQNRHNMDDILQNVPNHNIKVIVVTDGERILGLGDQGIGGMGIPIGKLSLYTACGGISPAYTLPVVLDVGTNNQQLLNDPLYMGWRNPRITDDEYYEFVDEFIQAVKQRWPDVLLQFEDFAQKNAMPLLNRYRNEICSFNDDIQGTAAVTVGTLIAASRAAGGQLSEKKIVFLGAGSAGCGIAEMIIAQTPREGLSEEAARQKVFMVDRFGLLTDKMPNLLPFQTKLVQKRENLSDWDTDSDVLSLLDVVRNVKPDILIGVSGQTGLFTEEIIREMHKHCPRPIVMPLSNPTSRVEATPQDIIAWTEGNALVATGSPFNPVVWKDKIYPIAQCNNAFIFPGIGLGVIASGASRITDEMLMSASETLAQYSPLVLNGEGLVLPELKDIQKVSRAIAFAVGKMAQQQGVAVKTSAEALQQAIDDNFWQAEYRDYRRTSI.

The Proton donor role is filled by Tyr-104. Arg-157 contacts NAD(+). Lys-175 (proton acceptor) is an active-site residue. The a divalent metal cation site is built by Glu-246, Asp-247, and Asp-270. Residues Asp-270 and Asn-418 each coordinate NAD(+).

It belongs to the malic enzymes family. As to quaternary structure, homotetramer. The cofactor is Mg(2+). Mn(2+) serves as cofactor.

It carries out the reaction (S)-malate + NAD(+) = pyruvate + CO2 + NADH. It catalyses the reaction oxaloacetate + H(+) = pyruvate + CO2. In Shigella sonnei (strain Ss046), this protein is NAD-dependent malic enzyme.